A 220-amino-acid chain; its full sequence is Thiamine-phosphate synthase (220 aa).

4-amino-2-methyl-5-(diphosphooxymethyl)pyrimidine-binding positions include 39-43 (QLRDK) and N80. D81 and D100 together coordinate Mg(2+). Residue S119 participates in 4-amino-2-methyl-5-(diphosphooxymethyl)pyrimidine binding. A 2-[(2R,5Z)-2-carboxy-4-methylthiazol-5(2H)-ylidene]ethyl phosphate-binding site is contributed by 145–147 (TPT). K148 is a binding site for 4-amino-2-methyl-5-(diphosphooxymethyl)pyrimidine. 2-[(2R,5Z)-2-carboxy-4-methylthiazol-5(2H)-ylidene]ethyl phosphate is bound at residue G176.

The protein belongs to the thiamine-phosphate synthase family. Mg(2+) is required as a cofactor.

It carries out the reaction 2-[(2R,5Z)-2-carboxy-4-methylthiazol-5(2H)-ylidene]ethyl phosphate + 4-amino-2-methyl-5-(diphosphooxymethyl)pyrimidine + 2 H(+) = thiamine phosphate + CO2 + diphosphate. The catalysed reaction is 2-(2-carboxy-4-methylthiazol-5-yl)ethyl phosphate + 4-amino-2-methyl-5-(diphosphooxymethyl)pyrimidine + 2 H(+) = thiamine phosphate + CO2 + diphosphate. It catalyses the reaction 4-methyl-5-(2-phosphooxyethyl)-thiazole + 4-amino-2-methyl-5-(diphosphooxymethyl)pyrimidine + H(+) = thiamine phosphate + diphosphate. It functions in the pathway cofactor biosynthesis; thiamine diphosphate biosynthesis; thiamine phosphate from 4-amino-2-methyl-5-diphosphomethylpyrimidine and 4-methyl-5-(2-phosphoethyl)-thiazole: step 1/1. Functionally, condenses 4-methyl-5-(beta-hydroxyethyl)thiazole monophosphate (THZ-P) and 2-methyl-4-amino-5-hydroxymethyl pyrimidine pyrophosphate (HMP-PP) to form thiamine monophosphate (TMP). This is Thiamine-phosphate synthase from Mycobacterium marinum (strain ATCC BAA-535 / M).